The following is a 569-amino-acid chain: Protein germ cell-less (569 aa).

The disordered stretch occupies residues 17–43; it reads SNRRKRKRSTDSSLGKDDPAQLDTTQP. Residues 66 to 136 form the BTB domain; the sequence is SDVAVMALDK…MYSDEIEIES (71 aa). The interval 517-553 is disordered; that stretch reads GANSDRPLSPSSADDSAVFIGDSEPSTPSSPAPRPRI.

The protein localises to the cytoplasm. Required for the specification of pole cells and germ cell formation. Mothers with reduced glc function give rise to sterile adult progeny that lack germ cells. The sequence is that of Protein germ cell-less (gcl) from Drosophila melanogaster (Fruit fly).